The primary structure comprises 101 residues: Small ribosomal subunit protein uS14 (101 aa).

The protein belongs to the universal ribosomal protein uS14 family. In terms of assembly, part of the 30S ribosomal subunit. Contacts proteins S3 and S10.

Binds 16S rRNA, required for the assembly of 30S particles and may also be responsible for determining the conformation of the 16S rRNA at the A site. The sequence is that of Small ribosomal subunit protein uS14 from Pseudomonas putida (strain W619).